We begin with the raw amino-acid sequence, 132 residues long: Small ribosomal subunit protein uS11 (132 aa).

Belongs to the universal ribosomal protein uS11 family. Part of the 30S ribosomal subunit. Interacts with proteins S7 and S18. Binds to IF-3.

Its function is as follows. Located on the platform of the 30S subunit, it bridges several disparate RNA helices of the 16S rRNA. Forms part of the Shine-Dalgarno cleft in the 70S ribosome. This Chlamydia abortus (strain DSM 27085 / S26/3) (Chlamydophila abortus) protein is Small ribosomal subunit protein uS11.